The sequence spans 348 residues: S-adenosylmethionine:tRNA ribosyltransferase-isomerase (348 aa).

It belongs to the QueA family. As to quaternary structure, monomer.

The protein localises to the cytoplasm. It carries out the reaction 7-aminomethyl-7-carbaguanosine(34) in tRNA + S-adenosyl-L-methionine = epoxyqueuosine(34) in tRNA + adenine + L-methionine + 2 H(+). The protein operates within tRNA modification; tRNA-queuosine biosynthesis. Transfers and isomerizes the ribose moiety from AdoMet to the 7-aminomethyl group of 7-deazaguanine (preQ1-tRNA) to give epoxyqueuosine (oQ-tRNA). The sequence is that of S-adenosylmethionine:tRNA ribosyltransferase-isomerase from Alteromonas mediterranea (strain DSM 17117 / CIP 110805 / LMG 28347 / Deep ecotype).